Reading from the N-terminus, the 180-residue chain is ATP synthase subunit delta (180 aa).

This sequence belongs to the ATPase delta chain family. F-type ATPases have 2 components, F(1) - the catalytic core - and F(0) - the membrane proton channel. F(1) has five subunits: alpha(3), beta(3), gamma(1), delta(1), epsilon(1). F(0) has three main subunits: a(1), b(2) and c(10-14). The alpha and beta chains form an alternating ring which encloses part of the gamma chain. F(1) is attached to F(0) by a central stalk formed by the gamma and epsilon chains, while a peripheral stalk is formed by the delta and b chains.

Its subcellular location is the cell inner membrane. Functionally, f(1)F(0) ATP synthase produces ATP from ADP in the presence of a proton or sodium gradient. F-type ATPases consist of two structural domains, F(1) containing the extramembraneous catalytic core and F(0) containing the membrane proton channel, linked together by a central stalk and a peripheral stalk. During catalysis, ATP synthesis in the catalytic domain of F(1) is coupled via a rotary mechanism of the central stalk subunits to proton translocation. This protein is part of the stalk that links CF(0) to CF(1). It either transmits conformational changes from CF(0) to CF(1) or is implicated in proton conduction. The chain is ATP synthase subunit delta from Anaplasma phagocytophilum (strain HZ).